Consider the following 407-residue polypeptide: Accessory Sec system protein translocase subunit SecY2 (407 aa).

10 consecutive transmembrane segments (helical) span residues 13–33 (FLWT…TLPF), 65–85 (FFSI…MFTV), 104–124 (MLLT…NLPL), 133–153 (GTIV…LIWL), 158–178 (SSMG…SYIP), 192–212 (PLIL…AVLV), 248–268 (IMYA…LLFF), 287–307 (IPWF…FAFI), 345–365 (FAFV…LLIF), and 370–390 (YMRL…VFSI).

Belongs to the SecY/SEC61-alpha family. SecY2 subfamily. May form heterotrimers with SecE and SecG subunits (Potential). Component of the accessory SecA2/SecY2 protein translocase complex required to export cell wall protein GspB.

It localises to the cell membrane. Functionally, the central subunit of a protein translocation channel (Potential). Part of the accessory SecA2/SecY2 system specifically required to export GspB, a serine-rich repeat cell wall protein encoded upstream in the same operon. The chain is Accessory Sec system protein translocase subunit SecY2 from Streptococcus gordonii.